The primary structure comprises 149 residues: MARYFPVQKTTMIKPEEVERKWYVVDASGKVLGRLATRIAKILMGKHKPNYTPHVDTGDYVIVVNADKVVLTGKKLDQKVYYWHSGYPGGLKSLTARQMLEKHPERLIWLAVKRMLPKNRKGRKMLKRLKVYASPEHPHQAQKPEPIEL.

It belongs to the universal ribosomal protein uL13 family. As to quaternary structure, part of the 50S ribosomal subunit.

This protein is one of the early assembly proteins of the 50S ribosomal subunit, although it is not seen to bind rRNA by itself. It is important during the early stages of 50S assembly. The polypeptide is Large ribosomal subunit protein uL13 (Thermotoga maritima (strain ATCC 43589 / DSM 3109 / JCM 10099 / NBRC 100826 / MSB8)).